A 191-amino-acid chain; its full sequence is MIRITDTAQEHFAKLLANQEEGTQIRVFVINPGTPTAECGVSYCPPDAVEATDTELKFEKLSAYIDELSKPYLDDAEIDFVTDQLGSQLTLKAPNAKMRKVDDNAPLMERVEYVLQSQINPQLAGHGGRVTLMEITDDSLAILQFGGGCNGCSMVDVTLKEGIEKELLQKFPELKGVRDLTEHQRGEHSYY.

2 residues coordinate [4Fe-4S] cluster: Cys149 and Cys152.

This sequence belongs to the NfuA family. As to quaternary structure, homodimer. It depends on [4Fe-4S] cluster as a cofactor.

Functionally, involved in iron-sulfur cluster biogenesis. Binds a 4Fe-4S cluster, can transfer this cluster to apoproteins, and thereby intervenes in the maturation of Fe/S proteins. Could also act as a scaffold/chaperone for damaged Fe/S proteins. This Serratia proteamaculans (strain 568) protein is Fe/S biogenesis protein NfuA.